A 55-amino-acid polypeptide reads, in one-letter code: Conotoxin Cal6.40 (55 aa).

An N-terminal signal peptide occupies residues 1 to 21 (MSGSGVLLLTLLLLVPLSALA). Cystine bridges form between cysteine 24/cysteine 36, cysteine 29/cysteine 41, and cysteine 35/cysteine 50.

Expressed by the venom duct.

It is found in the secreted. Its function is as follows. Probable neurotoxin. The protein is Conotoxin Cal6.40 of Californiconus californicus (California cone).